Here is a 435-residue protein sequence, read N- to C-terminus: 3-ketoacyl-CoA thiolase (435 aa).

The Acyl-thioester intermediate role is filled by C98. Catalysis depends on proton acceptor residues H391 and C421.

Belongs to the thiolase-like superfamily. Thiolase family. As to quaternary structure, heterotetramer of two alpha chains (FadJ) and two beta chains (FadI).

The protein resides in the cytoplasm. The enzyme catalyses an acyl-CoA + acetyl-CoA = a 3-oxoacyl-CoA + CoA. Its pathway is lipid metabolism; fatty acid beta-oxidation. In terms of biological role, catalyzes the final step of fatty acid oxidation in which acetyl-CoA is released and the CoA ester of a fatty acid two carbons shorter is formed. The protein is 3-ketoacyl-CoA thiolase of Vibrio cholerae serotype O1 (strain ATCC 39315 / El Tor Inaba N16961).